Here is a 188-residue protein sequence, read N- to C-terminus: Elongation factor P (188 aa).

This sequence belongs to the elongation factor P family.

It is found in the cytoplasm. Its pathway is protein biosynthesis; polypeptide chain elongation. Functionally, involved in peptide bond synthesis. Stimulates efficient translation and peptide-bond synthesis on native or reconstituted 70S ribosomes in vitro. Probably functions indirectly by altering the affinity of the ribosome for aminoacyl-tRNA, thus increasing their reactivity as acceptors for peptidyl transferase. In Mycoplasma mobile (strain ATCC 43663 / 163K / NCTC 11711) (Mesomycoplasma mobile), this protein is Elongation factor P.